The chain runs to 946 residues: Bifunctional glutamine synthetase adenylyltransferase/adenylyl-removing enzyme (946 aa).

Positions 1-440 (MKPLSSPLQQ…VFNELIGDDE (440 aa)) are adenylyl removase. Positions 449–946 (SEQWRELWQD…ASWQKWLVEE (498 aa)) are adenylyl transferase.

It belongs to the GlnE family. Mg(2+) is required as a cofactor.

The enzyme catalyses [glutamine synthetase]-O(4)-(5'-adenylyl)-L-tyrosine + phosphate = [glutamine synthetase]-L-tyrosine + ADP. It carries out the reaction [glutamine synthetase]-L-tyrosine + ATP = [glutamine synthetase]-O(4)-(5'-adenylyl)-L-tyrosine + diphosphate. In terms of biological role, involved in the regulation of glutamine synthetase GlnA, a key enzyme in the process to assimilate ammonia. When cellular nitrogen levels are high, the C-terminal adenylyl transferase (AT) inactivates GlnA by covalent transfer of an adenylyl group from ATP to specific tyrosine residue of GlnA, thus reducing its activity. Conversely, when nitrogen levels are low, the N-terminal adenylyl removase (AR) activates GlnA by removing the adenylyl group by phosphorolysis, increasing its activity. The regulatory region of GlnE binds the signal transduction protein PII (GlnB) which indicates the nitrogen status of the cell. The protein is Bifunctional glutamine synthetase adenylyltransferase/adenylyl-removing enzyme of Shigella boydii serotype 18 (strain CDC 3083-94 / BS512).